Reading from the N-terminus, the 1079-residue chain is Extracellular calcium-sensing receptor (1079 aa).

An N-terminal signal peptide occupies residues 1 to 19; it reads MAWFGYCLALLALTWHSSA. The Extracellular portion of the chain corresponds to 20 to 610; it reads YGPDQRAQKK…KEIEFLAWTE (591 aa). The tract at residues 22–188 is ligand-binding 1 (LB1); sequence PDQRAQKKGD…QFKSFLRTIP (167 aa). C60 and C101 are disulfide-bonded. 66–70 contributes to the phosphate binding site; sequence RGFRW. Residues I81, S84, L87, and L88 each contribute to the Ca(2+) site. Residue N90 is glycosylated (N-linked (GlcNAc...) asparagine). T100 is a Ca(2+) binding site. A glycan (N-linked (GlcNAc...) asparagine) is linked at N130. Residue T145 coordinates Ca(2+). S147, A168, and S170 together coordinate L-tryptophan. Positions 170, 188, 190, 231, and 234 each coordinate Ca(2+). The interval 189–324 is ligand-binding 2 (LB2); it reads NDEHQATAMA…GGTIGFGLKA (136 aa). 7 disulfide bridges follow: C236/C561, C358/C395, C437/C449, C542/C562, C546/C565, C568/C582, and C585/C598. Residues D238 and S240 each contribute to the spermine site. Residues N261 and N287 are each glycosylated (N-linked (GlcNAc...) asparagine). E297 is a binding site for Ca(2+). E297 lines the L-tryptophan pocket. A glycan (N-linked (GlcNAc...) asparagine) is linked at N386. 415–417 is a phosphate binding site; that stretch reads RIS. Residues N446, N468, and N488 are each glycosylated (N-linked (GlcNAc...) asparagine). Residue Y489 participates in Ca(2+) binding. Residue N541 is glycosylated (N-linked (GlcNAc...) asparagine). A cysteine-rich (CR) region spans residues 542–612; it reads CSRDCQAGTR…IEFLAWTEPF (71 aa). G557 lines the Ca(2+) pocket. A glycan (N-linked (GlcNAc...) asparagine) is linked at N594. The chain crosses the membrane as a helical span at residues 611–636; sequence PFGIALTLFAVLGIFLTAFVLGVFIK. Residues 637-648 are Cytoplasmic-facing; that stretch reads FRNTPIVKATNR. Residues 637 to 648 form an intracellular loop 1 (ICL1) region; it reads FRNTPIVKATNR. The chain crosses the membrane as a helical span at residues 649–668; that stretch reads ELSYLLLFSLLCCFSSSLFF. Topologically, residues 669–674 are extracellular; the sequence is IGEPQD. A helical membrane pass occupies residues 675–698; sequence WTCRLRQPAFGISFVLCISCILVK. Topologically, residues 699 to 722 are cytoplasmic; that stretch reads TNRVLLVFEAKIPTSFHRKWWGLN. The interval 699-722 is intracellular loop 2 (ICL2); the sequence is TNRVLLVFEAKIPTSFHRKWWGLN. The chain crosses the membrane as a helical span at residues 723-745; that stretch reads LQFLLVFLCTFMQIVICIIWLYT. Residues 746-769 are Extracellular-facing; that stretch reads APPSSYRNHELEDEIIFITCHEGS. A helical membrane pass occupies residues 770 to 789; the sequence is LMALGSLIGYTCLLAAICFF. At 790–805 the chain is on the cytoplasmic side; it reads FAFKSRKLPENFNEAK. The tract at residues 790 to 805 is intracellular loop 3 (ICL3); the sequence is FAFKSRKLPENFNEAK. The chain crosses the membrane as a helical span at residues 806-828; that stretch reads FITFSMLIFFIVWISFIPAYAST. The Extracellular segment spans residues 829–832; that stretch reads YGKF. A helical transmembrane segment spans residues 833 to 854; sequence VSAVEVIAILAASFGLLACIFF. The Cytoplasmic segment spans residues 855–1079; it reads NKVYIILFKP…SSVTENILHS (225 aa). The tract at residues 855-1079 is C-terminus; sequence NKVYIILFKP…SSVTENILHS (225 aa). The interval 880 to 900 is interaction with RNF19A; sequence AFKVAARATLRRPNISRKRSS. T888 is modified (phosphothreonine). Residues 890–898 are arginine-rich retention motif; the sequence is RRPNISRKR. Residues 894–964 are disordered; sequence ISRKRSSSLG…QQQPQQPRCK (71 aa). The residue at position 899 (S899) is a Phosphoserine. Residues 900-918 show a composition bias toward low complexity; the sequence is SSLGGSTGSIPSSSISSKS. Basic and acidic residues predominate over residues 919 to 931; it reads NSEDRFPQPERQK. S920 carries the post-translational modification Phosphoserine. Positions 932 to 961 are enriched in low complexity; it reads QQQPLALTQQEQQQQPLTLQPQQQQQPQQP. S1062 bears the Phosphoserine mark.

Belongs to the G-protein coupled receptor 3 family. As to quaternary structure, homodimer; disulfide-linked. Interacts with VCP. Interacts with ARRB1. In terms of processing, phosphorylation at Thr-888 by PKC impairs coupling with G(q)/G(11) G-proteins, while it does not affect G(i)/G(o)-coupling. Phosphorylation at Ser-899 by PKA promote plasma membrane localization. Ubiquitinated by RNF19A; which induces proteasomal degradation. As to expression, epidermis, kidney and cartilage.

Its subcellular location is the cell membrane. With respect to regulation, in resting state, adopts an open conformation, anion-binding promoting the inactive configuration. Upon aromatic amino acid-binding, the groove in the extracellular venus flytrap module is closed, thereby inducing the formation of a novel homodimer interface between subunits. Calcium ions stabilize the active state by enhancing homodimer interactions between membrane-proximal domains to fully activate the receptor. Upon activation, the homodimer adopts an asymmetric configuration of the 7-transmembrane region that primes one protomer for G-protein coupling. G-protein binding expands the transmembrane dimer interface; the restriction imposed by the receptor dimer, in combination with intracellular loop 2 (ICL2), enables G-protein activation by facilitating conformational transition of G-protein alpha. Coupling to different classes of G-proteins results in distinct CASR-G-protein interfaces. Functionally, G-protein-coupled receptor that senses changes in the extracellular concentration of calcium ions and plays a key role in maintaining calcium homeostasis. Senses fluctuations in the circulating calcium concentration: activated by elevated circulating calcium, leading to decreased parathyroid hormone (PTH) secretion in parathyroid glands. In kidneys, acts as a key regulator of renal tubular calcium resorption. Ligand binding causes a conformation change that triggers signaling via guanine nucleotide-binding proteins (G-proteins) and modulates the activity of downstream effectors. CASR is coupled with different G(q)/G(11), G(i)/G(o)- or G(s)-classes of G-proteins depending on the context. In the parathyroid and kidney, CASR signals through G(q)/G(11) and G(i)/G(o) G-proteins: G(q)/G(11) coupling activates phospholipase C-beta, releasing diacylglycerol (DAG) and inositol 1,4,5-trisphosphate (IP3) second messengers, while G(i)/G(o) coupling mediates inhibition of adenylate cyclase activity. The G-protein-coupled receptor activity is activated by a co-agonist mechanism: aromatic amino acids, such as Trp or Phe, act concertedly with divalent cations, such as calcium or magnesium, to achieve full receptor activation. Acts as an activator of the NLRP3 inflammasome via G(i)/G(o)-mediated signaling: down-regulation of cyclic AMP (cAMP) relieving NLRP3 inhibition by cAMP. Acts as a regulator of proton-sensing receptor GPR68 in a seesaw manner: CASR-mediated signaling inhibits GPR68 signaling in response to extracellular calcium, while GPR68 inhibits CASR in presence of extracellular protons. The sequence is that of Extracellular calcium-sensing receptor from Mus musculus (Mouse).